A 213-amino-acid polypeptide reads, in one-letter code: Urease accessory protein UreG (213 aa).

17 to 24 (GPVGSGKT) lines the GTP pocket.

It belongs to the SIMIBI class G3E GTPase family. UreG subfamily. In terms of assembly, homodimer. UreD, UreF and UreG form a complex that acts as a GTP-hydrolysis-dependent molecular chaperone, activating the urease apoprotein by helping to assemble the nickel containing metallocenter of UreC. The UreE protein probably delivers the nickel.

It localises to the cytoplasm. Functionally, facilitates the functional incorporation of the urease nickel metallocenter. This process requires GTP hydrolysis, probably effectuated by UreG. The protein is Urease accessory protein UreG of Delftia acidovorans (strain DSM 14801 / SPH-1).